Consider the following 179-residue polypeptide: Beta-defensin 22 (179 aa).

The first 20 residues, 1–20 (MKSLLSTLVIIMFLAHLVTG), serve as a signal peptide directing secretion. 3 cysteine pairs are disulfide-bonded: Cys-27–Cys-58, Cys-34–Cys-52, and Cys-38–Cys-59. The span at 105 to 150 (GTPTKTSAPAKTSAPAKTSTTTKASNAAKASTTTKASNAAKASAAT) shows a compositional bias: low complexity. The interval 105-152 (GTPTKTSAPAKTSAPAKTSTTTKASNAAKASTTTKASNAAKASAATMA) is disordered.

This sequence belongs to the beta-defensin family. O-glycosylated; glycans contain alpha(2,3)-linked sialic acids. Specifically expressed in corpus epididymis and cauda epididymis with expression in corpus being highest (at protein level). Not detected in other tissues tested, including testis, prostate, seminal vesicle and vas deferens (at protein level).

Its subcellular location is the cytoplasmic vesicle. It is found in the secretory vesicle. It localises to the acrosome. The protein localises to the secreted. The protein resides in the extracellular space. Probable component of sperm glycocalyx. Likely protects and facilitates transport of sperm in the female reproductive tract. Probably released from the sperm surface during capacitation. This is Beta-defensin 22 from Mus musculus (Mouse).